The sequence spans 205 residues: Syndecan 4-B (205 aa).

The signal sequence occupies residues 1 to 17 (MNRLLLLLALVLSGVAA). At 18 to 162 (ESIRETETMD…FFQRTEVIVA (145 aa)) the chain is on the extracellular side. The segment at 26–113 (MDPTSMLEYE…HDFDETKTGR (88 aa)) is disordered. O-linked (Xyl...) (glycosaminoglycan) serine glycosylation is found at S37, S73, and S75. The span at 44 to 94 (VFVDEDDDDDYEDGVDYEIDSESDNDEDYSGSGDDDFDDEDNVEDEDEEET) shows a compositional bias: acidic residues. A compositionally biased stretch (basic and acidic residues) spans 102–113 (PEHDFDETKTGR). A helical transmembrane segment spans residues 163–183 (IIAGTLVGLVVAVSFIVFLVI). Topologically, residues 184-205 (RRNQNGDLVKKPIYKKTSTMEV) are cytoplasmic.

It belongs to the syndecan proteoglycan family. As to quaternary structure, interacts with the Wnt receptor fzd7 and its signal transducer dvl2/dsh. In terms of processing, O-glycosylated; contains both chondroitin sulfate and heparan sulfate. Ser-37, Ser-73 and Ser-75 can all be modified by either chondroitin sulfate or heparan sulfate, and the protein exists in forms that contain only chondroitin sulfate, only heparan sulfate and both chondroitin sulfate and heparan sulfate. In terms of tissue distribution, expressed in the animal hemisphere from the 4-cell to the blastula stage. During gastrulation, expressed in the involuting dorsal mesoderm and ectoderm. After involution, localized mainly to the anterior neuroectoderm. At later stages, expressed in the brain, branchial arches, pronephros, tailbud, and at low levels in the somites.

It is found in the membrane. Functionally, cell surface proteoglycan. Regulates non-canonical Wnt signaling, being necessary and sufficient for fibronectrin-mediated translocation of dvl2/dsh to the plasma membrane. Required for proper convergent extension movements during gastrulation, which shape the neural plate, and for subsequent neural tube closure. This is Syndecan 4-B (sdc4-b) from Xenopus laevis (African clawed frog).